The chain runs to 828 residues: Periplasmic nitrate reductase (828 aa).

The tat-type signal signal peptide spans 1–31 (MKLSRRSFMKANAVAAAAAAAGLSVPGVARA). Residues 39–95 (IKWDKAPCRFCGTGCGVLVGTQQGRVVACQGDPDAPVNRGLNCIKGYFLPKIMYGKD) enclose the 4Fe-4S Mo/W bis-MGD-type domain. Cys46, Cys49, Cys53, and Cys81 together coordinate [4Fe-4S] cluster. Residues Lys83, Gln150, Asn175, Cys179, 212 to 219 (WGSNMAEM), 243 to 247 (STFQH), 262 to 264 (QSD), Met372, Gln376, Asn482, 508 to 509 (SD), Lys531, Asp558, and 718 to 727 (TGRVLEHWHT) contribute to the Mo-bis(molybdopterin guanine dinucleotide) site. Position 794 (Phe794) interacts with substrate. Mo-bis(molybdopterin guanine dinucleotide)-binding residues include Asn802 and Lys819.

This sequence belongs to the prokaryotic molybdopterin-containing oxidoreductase family. NasA/NapA/NarB subfamily. As to quaternary structure, component of the periplasmic nitrate reductase NapAB complex composed of NapA and NapB. The cofactor is [4Fe-4S] cluster. Mo-bis(molybdopterin guanine dinucleotide) is required as a cofactor. In terms of processing, predicted to be exported by the Tat system. The position of the signal peptide cleavage has not been experimentally proven.

The protein localises to the periplasm. The catalysed reaction is 2 Fe(II)-[cytochrome] + nitrate + 2 H(+) = 2 Fe(III)-[cytochrome] + nitrite + H2O. Its function is as follows. Catalytic subunit of the periplasmic nitrate reductase complex NapAB. Receives electrons from NapB and catalyzes the reduction of nitrate to nitrite. The polypeptide is Periplasmic nitrate reductase (Salmonella agona (strain SL483)).